The sequence spans 216 residues: tRNA (guanine-N(7)-)-methyltransferase (216 aa).

Residues Glu-44, Glu-69, Asn-96, and Asp-118 each contribute to the S-adenosyl-L-methionine site. Asp-118 is a catalytic residue. Residue Lys-122 coordinates substrate. The interaction with RNA stretch occupies residues 124-129 (RHEKRR). Substrate contacts are provided by residues Asp-154 and 191-194 (TEYE).

This sequence belongs to the class I-like SAM-binding methyltransferase superfamily. TrmB family.

It carries out the reaction guanosine(46) in tRNA + S-adenosyl-L-methionine = N(7)-methylguanosine(46) in tRNA + S-adenosyl-L-homocysteine. It participates in tRNA modification; N(7)-methylguanine-tRNA biosynthesis. Its function is as follows. Catalyzes the formation of N(7)-methylguanine at position 46 (m7G46) in tRNA. This Geobacillus thermodenitrificans (strain NG80-2) protein is tRNA (guanine-N(7)-)-methyltransferase.